Consider the following 623-residue polypeptide: Glutathione import ATP-binding protein GsiA (623 aa).

ABC transporter domains lie at 15–269 (VENL…RALL) and 314–564 (LRVR…RKLL). ATP contacts are provided by residues 49–56 (GESGSGKS) and 357–364 (GESGSGKS).

It belongs to the ABC transporter superfamily. Glutathione importer (TC 3.A.1.5.11) family. As to quaternary structure, the complex is composed of two ATP-binding proteins (GsiA), two transmembrane proteins (GsiC and GsiD) and a solute-binding protein (GsiB).

The protein localises to the cell inner membrane. It catalyses the reaction glutathione(out) + ATP + H2O = glutathione(in) + ADP + phosphate + H(+). With respect to regulation, inhibited by verapamil but not by carbonyl cyanide m-chlorophenylhydrazone (CCCP). In terms of biological role, part of the ABC transporter complex GsiABCD involved in glutathione import. Responsible for energy coupling to the transport system. The chain is Glutathione import ATP-binding protein GsiA from Escherichia coli (strain K12).